Reading from the N-terminus, the 184-residue chain is Adenine phosphoribosyltransferase (184 aa).

The protein belongs to the purine/pyrimidine phosphoribosyltransferase family. Homodimer.

The protein localises to the cytoplasm. The catalysed reaction is AMP + diphosphate = 5-phospho-alpha-D-ribose 1-diphosphate + adenine. It functions in the pathway purine metabolism; AMP biosynthesis via salvage pathway; AMP from adenine: step 1/1. In terms of biological role, catalyzes a salvage reaction resulting in the formation of AMP, that is energically less costly than de novo synthesis. In Sphingopyxis alaskensis (strain DSM 13593 / LMG 18877 / RB2256) (Sphingomonas alaskensis), this protein is Adenine phosphoribosyltransferase.